We begin with the raw amino-acid sequence, 551 residues long: Glucans biosynthesis protein D (551 aa).

Residues 1–32 (MNRRRFIKASLALAAACGTPGLATLFSRNAWA) constitute a signal peptide (tat-type signal).

This sequence belongs to the OpgD/OpgG family. In terms of processing, predicted to be exported by the Tat system. The position of the signal peptide cleavage has not been experimentally proven.

It is found in the periplasm. Its pathway is glycan metabolism; osmoregulated periplasmic glucan (OPG) biosynthesis. Probably involved in the control of the structural glucose backbone of osmoregulated periplasmic glucans (OPGs). The chain is Glucans biosynthesis protein D from Cronobacter sakazakii (strain ATCC BAA-894) (Enterobacter sakazakii).